The following is a 438-amino-acid chain: Adenylosuccinate synthetase (438 aa).

Residues 13-19 (GDEGKGK) and 41-43 (GHT) each bind GTP. D14 (proton acceptor) is an active-site residue. Positions 14 and 41 each coordinate Mg(2+). Residues 14 to 17 (DEGK), 39 to 42 (NAGH), T130, R144, Q225, T240, and R310 each bind IMP. The active-site Proton donor is H42. 306–312 (ATTGRLR) is a binding site for substrate. GTP-binding positions include R312, 338–340 (KLD), and 421–423 (STG).

This sequence belongs to the adenylosuccinate synthetase family. In terms of assembly, homodimer. It depends on Mg(2+) as a cofactor.

The protein localises to the cytoplasm. The enzyme catalyses IMP + L-aspartate + GTP = N(6)-(1,2-dicarboxyethyl)-AMP + GDP + phosphate + 2 H(+). The protein operates within purine metabolism; AMP biosynthesis via de novo pathway; AMP from IMP: step 1/2. Its function is as follows. Plays an important role in the de novo pathway of purine nucleotide biosynthesis. Catalyzes the first committed step in the biosynthesis of AMP from IMP. This Aliivibrio fischeri (strain ATCC 700601 / ES114) (Vibrio fischeri) protein is Adenylosuccinate synthetase.